The following is a 339-amino-acid chain: Phenylalanine--tRNA ligase alpha subunit (339 aa).

Mg(2+) is bound at residue Glu250.

This sequence belongs to the class-II aminoacyl-tRNA synthetase family. Phe-tRNA synthetase alpha subunit type 1 subfamily. As to quaternary structure, tetramer of two alpha and two beta subunits. The cofactor is Mg(2+).

It localises to the cytoplasm. The enzyme catalyses tRNA(Phe) + L-phenylalanine + ATP = L-phenylalanyl-tRNA(Phe) + AMP + diphosphate + H(+). This is Phenylalanine--tRNA ligase alpha subunit from Azobacteroides pseudotrichonymphae genomovar. CFP2.